The primary structure comprises 960 residues: Mast/stem cell growth factor receptor Kit (960 aa).

A signal peptide spans 1 to 24 (MEGAHLAWELAHAVLLLSLIPAGG). Residues 25–511 (SVPHEESSLV…IRTHTLFTPL (487 aa)) lie on the Extracellular side of the membrane. 5 Ig-like C2-type domains span residues 27-102 (PHEE…VFVK), 111-194 (DSLI…LNVR), 201-294 (PVIT…LKAL), 303-396 (ATMN…VYVK), and 399-497 (PEIL…FNFA). 4 disulfides stabilise this stretch: C45–C87, C126–C175, C141–C172, and C222–C276. 12 N-linked (GlcNAc...) asparagine glycosylation sites follow: N76, N135, N149, N269, N286, N306, N318, N338, N343, N356, N453, and N469. C414 and C481 form a disulfide bridge. Residues 512–532 (LIAFGVAAGLMCIIVMILVYI) traverse the membrane as a helical segment. The Cytoplasmic segment spans residues 533 to 960 (YLQKPKYEVQ…TQPLLVREDV (428 aa)). A Mg(2+)-binding site is contributed by Y554. Residues Y554 and Y556 each carry the phosphotyrosine; by autocatalysis modification. The Protein kinase domain maps to 575–913 (LSFGKTLGAG…QIVQLIEQQL (339 aa)). Residues 582–589 (GAGAFGKV), K609, and 657–663 (EYCCYGD) each bind ATP. 2 positions are modified to phosphotyrosine; by autocatalysis: Y689 and Y706. D777 (proton acceptor) is an active-site residue. R781 lines the ATP pocket. Positions 782 and 795 each coordinate Mg(2+). Phosphotyrosine; by autocatalysis is present on residues Y808 and Y921.

Belongs to the protein kinase superfamily. Tyr protein kinase family. CSF-1/PDGF receptor subfamily. Ubiquitinated. KIT is rapidly ubiquitinated after autophosphorylation induced by KITLG/SCF binding, leading to internalization and degradation. In terms of processing, autophosphorylated on tyrosine residues. KITLG/SCF binding promotes autophosphorylation. Phosphorylated tyrosine residues are important for interaction with specific binding partners. High in the brain and testes and also present in the bursa of Fabricus, heart, kidney, lung, spleen thymus and ovary.

It is found in the cell membrane. It carries out the reaction L-tyrosyl-[protein] + ATP = O-phospho-L-tyrosyl-[protein] + ADP + H(+). In terms of biological role, tyrosine-protein kinase that acts as a cell-surface receptor for the cytokine KITLG/SCF and plays an essential role in the regulation of cell survival and proliferation, hematopoiesis, stem cell maintenance, gametogenesis, mast cell development, migration and function, and in melanogenesis. In response to KITLG/SCF binding, KIT can activate several signaling pathways. Promotes phosphorylation of PIK3R1, the regulatory subunit of phosphatidylinositol 3-kinase, and subsequent activation of the kinase AKT1. Activated KIT also transmits signals via GRB2 and activation of RAS, RAF1 and the MAP kinases MAPK1/ERK2 and/or MAPK3/ERK1. Promotes activation of STAT family members STAT1, STAT3, STAT5A and STAT5B. KIT promotes activation of PLCG1, leading to the production of the cellular signaling molecules diacylglycerol and inositol 1,4,5-trisphosphate. KIT signaling is modulated by protein phosphatases, and by rapid internalization and degradation of the receptor. This Gallus gallus (Chicken) protein is Mast/stem cell growth factor receptor Kit (KIT).